We begin with the raw amino-acid sequence, 483 residues long: Endoplasmic reticulum lectin 1 (483 aa).

The signal sequence occupies residues 1–33 (MEEGGGGVRSLVPGGPVLLVLCGLLEASGGGRA). 2 consecutive MRH domains span residues 111-246 (SSCS…LCSH) and 342-469 (SYCF…ICKI). A disulfide bridge links cysteine 113 with cysteine 126. The N-linked (GlcNAc...) asparagine glycan is linked to asparagine 195. Intrachain disulfides connect cysteine 199/cysteine 232, cysteine 215/cysteine 244, cysteine 344/cysteine 357, cysteine 421/cysteine 455, and cysteine 436/cysteine 467.

As to quaternary structure, may form a complex with OS9, HSPA5, SYVN1, and SEL1L with which it interacts directly. Interacts (via PRKCSH 2 domain) with KREMEN2 (when glycosylated). Interacts with HSPA5. Isoform 1 and isoform 2 are N-glycosylated.

Its subcellular location is the endoplasmic reticulum lumen. Probable lectin that binds selectively to improperly folded lumenal proteins. May function in endoplasmic reticulum quality control and endoplasmic reticulum-associated degradation (ERAD) of both non-glycosylated proteins and glycoproteins. This Homo sapiens (Human) protein is Endoplasmic reticulum lectin 1 (ERLEC1).